Here is a 224-residue protein sequence, read N- to C-terminus: CASP-like protein 3A1 (224 aa).

Topologically, residues 1-59 (MMMNGQKLAPAAEVAVQLPESKVAADNISGTMSGPLVGASGGGTTAAMRPFGRKAEVMH) are cytoplasmic. The chain crosses the membrane as a helical span at residues 60-80 (VLLRLLCIITSVAALSFMFTA). Topologically, residues 81–106 (QQSSTISIYGFMLPVQSKWSFSHSFE) are extracellular. A helical transmembrane segment spans residues 107–127 (YLVGVSAAVAAHSLLQLLISM). At 128-142 (SRLLRKSPVIPSRSH) the chain is on the cytoplasmic side. Residues 143–163 (AWLIFAGDQVFAYAMISAGAA) traverse the membrane as a helical segment. Over 164-192 (ASGVTNLNRTGIQHTALPNFCKPLQSFCD) the chain is Extracellular. A glycan (N-linked (GlcNAc...) asparagine) is linked at Asn-171. Residues 193–213 (HVAVSIFFTFTSCFLLAASAV) traverse the membrane as a helical segment. The Cytoplasmic segment spans residues 214–224 (QEVIWLSRSKY).

This sequence belongs to the Casparian strip membrane proteins (CASP) family. In terms of assembly, homodimer and heterodimers.

The protein resides in the cell membrane. This Populus trichocarpa (Western balsam poplar) protein is CASP-like protein 3A1.